A 157-amino-acid polypeptide reads, in one-letter code: Crossover junction endodeoxyribonuclease RuvC (157 aa).

Catalysis depends on residues Asp7, Glu66, and Asp139. 3 residues coordinate Mg(2+): Asp7, Glu66, and Asp139.

Belongs to the RuvC family. Homodimer which binds Holliday junction (HJ) DNA. The HJ becomes 2-fold symmetrical on binding to RuvC with unstacked arms; it has a different conformation from HJ DNA in complex with RuvA. In the full resolvosome a probable DNA-RuvA(4)-RuvB(12)-RuvC(2) complex forms which resolves the HJ. Requires Mg(2+) as cofactor.

Its subcellular location is the cytoplasm. The catalysed reaction is Endonucleolytic cleavage at a junction such as a reciprocal single-stranded crossover between two homologous DNA duplexes (Holliday junction).. Functionally, the RuvA-RuvB-RuvC complex processes Holliday junction (HJ) DNA during genetic recombination and DNA repair. Endonuclease that resolves HJ intermediates. Cleaves cruciform DNA by making single-stranded nicks across the HJ at symmetrical positions within the homologous arms, yielding a 5'-phosphate and a 3'-hydroxyl group; requires a central core of homology in the junction. The consensus cleavage sequence is 5'-(A/T)TT(C/G)-3'. Cleavage occurs on the 3'-side of the TT dinucleotide at the point of strand exchange. HJ branch migration catalyzed by RuvA-RuvB allows RuvC to scan DNA until it finds its consensus sequence, where it cleaves and resolves the cruciform DNA. In Helicobacter pylori (strain P12), this protein is Crossover junction endodeoxyribonuclease RuvC.